A 1045-amino-acid chain; its full sequence is Probable beta-glucosidase E (1045 aa).

Residues 1–74 are disordered; the sequence is MAPPDSTHGG…SGSYQLRPVD (74 aa). The Cytoplasmic portion of the chain corresponds to 1 to 163; it reads MAPPDSTHGG…PVKYARIWWR (163 aa). A compositionally biased stretch (basic and acidic residues) spans 11–20; sequence SFRDHLKTND. A helical; Signal-anchor for type II membrane protein transmembrane segment spans residues 164-184; it reads TLLAVIVTLAVVVWGFLSFAV. The Extracellular segment spans residues 185–1045; sequence SHREEPKVWP…SRDLPLMGEY (861 aa). 3 N-linked (GlcNAc...) asparagine glycosylation sites follow: Asn-226, Asn-234, and Asn-402. Asp-430 is a catalytic residue. N-linked (GlcNAc...) asparagine glycosylation is found at Asn-473, Asn-512, Asn-577, Asn-893, Asn-902, and Asn-988.

Belongs to the glycosyl hydrolase 3 family.

It localises to the cell membrane. It catalyses the reaction Hydrolysis of terminal, non-reducing beta-D-glucosyl residues with release of beta-D-glucose.. It participates in glycan metabolism; cellulose degradation. Beta-glucosidases are one of a number of cellulolytic enzymes involved in the degradation of cellulosic biomass. Catalyzes the last step releasing glucose from the inhibitory cellobiose. In Neosartorya fischeri (strain ATCC 1020 / DSM 3700 / CBS 544.65 / FGSC A1164 / JCM 1740 / NRRL 181 / WB 181) (Aspergillus fischerianus), this protein is Probable beta-glucosidase E (bglE).